The chain runs to 558 residues: Glucose-6-phosphate isomerase (558 aa).

Glu363 acts as the Proton donor in catalysis. Active-site residues include His394 and Lys522.

It belongs to the GPI family.

It localises to the cytoplasm. It carries out the reaction alpha-D-glucose 6-phosphate = beta-D-fructose 6-phosphate. Its pathway is carbohydrate biosynthesis; gluconeogenesis. It functions in the pathway carbohydrate degradation; glycolysis; D-glyceraldehyde 3-phosphate and glycerone phosphate from D-glucose: step 2/4. Catalyzes the reversible isomerization of glucose-6-phosphate to fructose-6-phosphate. This Blochmanniella floridana protein is Glucose-6-phosphate isomerase.